The following is a 738-amino-acid chain: Squalene hopane cyclase afumA (738 aa).

PFTB repeat units lie at residues 132–173 and 321–361; these read GSQY…RIIG and RRRC…KLHD. D460 acts as the Proton donor in catalysis. PFTB repeat units lie at residues 482-523, 581-621, and 634-675; these read VRDA…ESLC, CARA…QYFK, and AARA…SQTA.

The protein belongs to the terpene cyclase/mutase family.

It participates in secondary metabolite biosynthesis. Its function is as follows. Squalene hopane cyclase; part of the gene cluster that mediates the biosynthesis fumihopaside A, a hopane-type glucoside that enhances the thermotolerance and UV resistance of N.fumigata. The first step of fumihopaside A biosynthesis is performed by the squalene hopane cyclase afumA that catalyzes the cyclization of 3S-oxidosqualene into the hopene 21-beta-H-hopane-3-beta,22-diol. The cytochrome P450 monooxygenase afumB is responsible for both hydroxylation at C-24 and oxidations at C-30 of the afumA product. The glycosyltransferase afumC then catalyzes the glycosylation at C-24, using UDP-D-glucose as a donor, to produce fumihopaside A. AfumC is also able to accept UDP-D-galactose and UDP-D-glucuronic acid as donors to yield minor derivatives. Fumihopaside B, another minor derivative produced, is different from fumihopaside A due to the presence of a double bond between C-22 and C-29. The polypeptide is Squalene hopane cyclase afumA (Aspergillus fumigatus (strain CBS 144.89 / FGSC A1163 / CEA10) (Neosartorya fumigata)).